Consider the following 318-residue polypeptide: tRNA dimethylallyltransferase (318 aa).

Residue 9 to 16 (GATASGKT) participates in ATP binding. 11-16 (TASGKT) contributes to the substrate binding site. Interaction with substrate tRNA regions lie at residues 34-37 (DSAQ) and 158-162 (QRIIR).

This sequence belongs to the IPP transferase family. Monomer. Requires Mg(2+) as cofactor.

The catalysed reaction is adenosine(37) in tRNA + dimethylallyl diphosphate = N(6)-dimethylallyladenosine(37) in tRNA + diphosphate. Its function is as follows. Catalyzes the transfer of a dimethylallyl group onto the adenine at position 37 in tRNAs that read codons beginning with uridine, leading to the formation of N6-(dimethylallyl)adenosine (i(6)A). The sequence is that of tRNA dimethylallyltransferase from Dichelobacter nodosus (strain VCS1703A).